Consider the following 718-residue polypeptide: Serine/threonine-protein kinase tousled-like 2 (718 aa).

Positions 24–85 (GVSKGPLNSE…KGTPRGHKIS (62 aa)) are disordered. A compositionally biased stretch (polar residues) spans 29–44 (PLNSESSNQSLCSVGS). A compositionally biased stretch (basic and acidic residues) spans 46 to 61 (SDKEVETPEKKQNDQR). 4 positions are modified to phosphoserine: serine 73, glutamine 94, leucine 99, and serine 102. Residues 147–176 (QQNSPSSTGSGNTEHSCSSQKQISIQHRQT) are disordered. Positions 193–244 (NSDLEKKEGRIDDLLRANCDLRRQIDEQQKMLEKYKERLNRCVTMSKKLLIE) are required for interaction with TLK1 and DYNLL1/LC8. 3 coiled-coil regions span residues 193–244 (NSDL…LLIE), 285–315 (AFQN…KRKP), and 349–397 (HEQE…DNSQ). Residues 310-337 (LAKRKPPAMGQAPPATNEQKQRKSKTNG) form a disordered region. One can recognise a Protein kinase domain in the interval 408-687 (YLLLHLLGRG…VQQLACDPYL (280 aa)). ATP is bound by residues 414-422 (LGRGGFSEV) and lysine 437. Residue aspartate 538 is the Proton acceptor of the active site. At serine 696 the chain carries Phosphoserine; by CHEK1.

It belongs to the protein kinase superfamily. Ser/Thr protein kinase family. As to quaternary structure, monomer. May form homodimers; homodimerization may enhance autophosphoylation and enzymatic activity. Heterodimer with TLK1. Interacts with YWHAZ; association with 14-3-3 proteins such as YWHAZ regulates subcellular location. May also interact with FEZ1/LZTS1 and FEZ2. Interacts with CHD7 and CHD8. Interacts with DYNLL1/LC8. It depends on Mg(2+) as a cofactor. Phosphorylated at Ser-696, probably by CHEK1. Post-translationally, autophosphorylated; phosphorylation promotes the assembly of higher order oligomers and enzymatic activity. As to expression, ubiquitously expressed in all tissues examined, with high levels in heart and testis, in particular the pachytene spermatocytes and in round spermatids. Some evidence for the existence of a testis-specific isoform suggesting a role in spermatogenesis.

Its subcellular location is the nucleus. It is found in the nucleoplasm. The protein resides in the cytoplasm. The protein localises to the perinuclear region. It localises to the cytoskeleton. The catalysed reaction is L-seryl-[protein] + ATP = O-phospho-L-seryl-[protein] + ADP + H(+). It carries out the reaction L-threonyl-[protein] + ATP = O-phospho-L-threonyl-[protein] + ADP + H(+). With respect to regulation, cell cycle-regulated, with maximal activity in the S-phase. Rapidly and transiently inhibited by phosphorylation following the generation of DNA double-stranded breaks during S-phase, probably by CHEK1, possibly at Ser-696. This inhibition is cell cycle checkpoint- and ATM-dependent. Serine/threonine-protein kinase involved in the process of chromatin assembly and probably also DNA replication, transcription, repair, and chromosome segregation. Phosphorylates the chromatin assembly factors ASF1A and ASF1B. Phosphorylation of ASF1A prevents its proteasome-mediated degradation, thereby enhancing chromatin assembly. Negative regulator of amino acid starvation-induced autophagy. Functionally, testis-specific isoforms may play a role in spermatogenesis. Highly expressed in embryos throughout development. The sequence is that of Serine/threonine-protein kinase tousled-like 2 (Tlk2) from Mus musculus (Mouse).